Reading from the N-terminus, the 131-residue chain is Spermatocyte protein spe-27 (131 aa).

An N-terminal signal peptide occupies residues 1-17 (MNKSLIFLLSFAYSCYS).

Required for spermiogenesis. This Caenorhabditis elegans protein is Spermatocyte protein spe-27 (spe-27).